Here is a 397-residue protein sequence, read N- to C-terminus: Circumsporozoite protein (397 aa).

Residues 1–18 (MMRKLAILSVSSFLFVEA) form the signal peptide. Positions 69 to 313 (SRSLGENDDG…KNNNNEEPSD (245 aa)) are disordered. Positions 85–92 (KLRKPKHK) are required for the binding to heparan sulfate proteoglycans (HSPGs) on the surface of host hepatocytes. Residues 93-97 (KLKQP) are region I; contains the proteolytic cleavage site. Low complexity predominate over residues 101–273 (NPDPNANPNV…PNANPNANPN (173 aa)). A run of 42 repeats spans residues 105 to 108 (NANP), 109 to 112 (NVDP), 113 to 116 (NANP), 117 to 120 (NVDP), 121 to 124 (NANP), 125 to 128 (NVDP), 129 to 132 (NANP), 133 to 136 (NANP), 137 to 140 (NANP), 141 to 144 (NANP), 145 to 148 (NANP), 149 to 152 (NANP), 153 to 156 (NANP), 157 to 160 (NANP), 161 to 164 (NANP), 165 to 168 (NANP), 169 to 172 (NANP), 173 to 176 (NANP), 177 to 180 (NANP), 181 to 184 (NANP), 185 to 188 (NANP), 189 to 192 (NANP), 193 to 196 (NANP), 197 to 200 (NVDP), 201 to 204 (NANP), 205 to 208 (NANP), 209 to 212 (NANP), 213 to 216 (NANP), 217 to 220 (NANP), 221 to 224 (NANP), 225 to 228 (NANP), 229 to 232 (NANP), 233 to 236 (NANP), 237 to 240 (NANP), 241 to 244 (NANP), 245 to 248 (NANP), 249 to 252 (NANP), 253 to 256 (NANP), 257 to 260 (NANP), 261 to 264 (NANP), 265 to 268 (NANP), and 269 to 272 (NANP). The 42 X 4 AA tandem repeats of N-[AV]-[ND]-P stretch occupies residues 105–272 (NANPNVDPNA…NPNANPNANP (168 aa)). Polar residues predominate over residues 274 to 290 (KNNQGNGQGHNMPNDPN). Residues 295 to 309 (ENANANSAVKNNNNE) are compositionally biased toward low complexity. Positions 322–375 (KIQNSLSTEWSPCSVTCGNGIQVRIKPGSANKPKDELDYANDIEKKICKMEKCS) constitute a TSP type-1 domain. 2 disulfides stabilise this stretch: Cys-334–Cys-369 and Cys-338–Cys-374. The O-linked (Fuc) threonine glycan is linked to Thr-337. Cys-374 carries GPI-anchor amidated cysteine lipidation. Positions 375–397 (SSVFNVVNSSIGLIMVLSFLFLN) are cleaved as a propeptide — removed in mature form.

Belongs to the plasmodium circumsporozoite protein family. In terms of processing, during host cell invasion, proteolytically cleaved at the cell membrane in the region I by a papain-like cysteine protease of parasite origin. Cleavage is triggered by the sporozoite contact with highly sulfated heparan sulfate proteoglycans (HSPGs) present on the host hepatocyte cell surface. Cleavage exposes the TSP type-1 (TSR) domain and is required for productive invasion of host hepatocytes but not for adhesion to the host cell membrane. Cleavage is dispensable for sporozoite development in the oocyst, motility and for traversal of host and vector cells. Post-translationally, O-glycosylated; maybe by POFUT2.

It is found in the cell membrane. It localises to the cytoplasm. In terms of biological role, essential sporozoite protein. In the mosquito vector, required for sporozoite development in the oocyst, migration through the vector hemolymph and entry into the vector salivary glands. In the vertebrate host, required for sporozoite migration through the host dermis and infection of host hepatocytes. Binds to highly sulfated heparan sulfate proteoglycans (HSPGs) on the surface of host hepatocytes. Its function is as follows. In the vertebrate host, binds to highly sulfated heparan sulfate proteoglycans (HSPGs) on the surface of host hepatocytes and is required for sporozoite invasion of the host hepatocytes. The sequence is that of Circumsporozoite protein from Plasmodium falciparum (isolate NF54).